Reading from the N-terminus, the 292-residue chain is Elongation factor Ts (292 aa).

The interval 79-82 (TDFV) is involved in Mg(2+) ion dislocation from EF-Tu.

The protein belongs to the EF-Ts family.

Its subcellular location is the cytoplasm. Functionally, associates with the EF-Tu.GDP complex and induces the exchange of GDP to GTP. It remains bound to the aminoacyl-tRNA.EF-Tu.GTP complex up to the GTP hydrolysis stage on the ribosome. In Xylella fastidiosa (strain 9a5c), this protein is Elongation factor Ts.